Consider the following 192-residue polypeptide: MGRPVDKSVEQAFYFTKSPQTLVESGATVAYPPRTSNYHYEMELVLAIGKPGFRVSEDQAHELIYGYAAGLDMTRRDLQLVARDKGRPWDTGKDIEEGSVCSEIVPMQGVVVEQGAIALEVNGQTKQSSNVDKLIWNVREIIADLSTYYHLQPGDLIYTGTPEGVGAVVAGDKIIGRVEGIAEISLTVGPAE.

Residues Glu41, Glu43, and Asp72 each coordinate a divalent metal cation.

This sequence belongs to the FAH family. It depends on Mg(2+) as a cofactor. Requires Mn(2+) as cofactor.

The enzyme catalyses 3-fumarylpyruvate + H2O = fumarate + pyruvate + H(+). It participates in aromatic compound metabolism; naphthalene degradation. Functionally, involved in the catabolism of gentisate (2,5-dihydroxybenzoate) a key intermediates in the aerobic pathways for the metabolism of a large number of aromatic compoun such as naphthalene. Catalyzes the hydrolytic cleavage of fumarylpyruvate to form fumarate and pyruvate. The sequence is that of Fumarylpyruvate hydrolase from Ralstonia sp.